We begin with the raw amino-acid sequence, 665 residues long: Long chain acyl-CoA synthetase 2 (665 aa).

ATP is bound at residue 228–239; sequence IMYTSGTTGEPK. Residues 496 to 520 are fatty acid-binding; the sequence is DGWFHTGDIGEWQEDGSMKIIDRKK.

This sequence belongs to the ATP-dependent AMP-binding enzyme family. It depends on Mg(2+) as a cofactor. Expressed along the entire length of the stem, but expression was not entirely epidermal specific, with some expression found in internal cell layers as well. Was expressed in leave epidermal cells, flowers (sepals, petals, stamens, filaments and carpel), siliques and developing seeds. In roots, expression was detected in an internal cell layer, probably the endodermal layer.

It is found in the endoplasmic reticulum. The enzyme catalyses a long-chain fatty acid + ATP + CoA = a long-chain fatty acyl-CoA + AMP + diphosphate. It participates in lipid metabolism; fatty acid metabolism. Functionally, activation of long-chain fatty acids for both synthesis of cellular lipids, and degradation via beta-oxidation. Acts in the cutin pathway. Preferentially uses palmitate, palmitoleate, oleate and linoleate. Required for repression of lateral root formation through its role in cutin biosynthesis and subsequent aerial tissues permeability. The protein is Long chain acyl-CoA synthetase 2 (LACS2) of Arabidopsis thaliana (Mouse-ear cress).